The chain runs to 558 residues: D-xylose-proton symporter-like 3, chloroplastic (558 aa).

The N-terminal 31 residues, 1 to 31, are a transit peptide targeting the chloroplast; that stretch reads MAFAVSVQSHFAIRALKRDHFKNPSPRTFCS. Helical transmembrane passes span 98–118, 146–166, 175–195, 197–217, 238–258, 264–284, 359–379, 400–420, 426–446, 449–469, 491–511, and 522–542; these read VILP…DIGA, LVVS…YGVA, LIIA…APDL, ILLV…HGAP, LFIV…IDVV, MYGF…SLPA, ALTI…PSVL, VSVI…AKVD, PLLI…SAYY, LGGF…CYQI, GISL…FAFS, and LFLL…LVVP.

It belongs to the major facilitator superfamily. Sugar transporter (TC 2.A.1.1) family.

It is found in the plastid. Its subcellular location is the chloroplast membrane. The sequence is that of D-xylose-proton symporter-like 3, chloroplastic from Arabidopsis thaliana (Mouse-ear cress).